A 660-amino-acid polypeptide reads, in one-letter code: Bifunctional polymyxin resistance protein ArnA (660 aa).

Residues 1-304 are formyltransferase ArnAFT; it reads MKTVVFAYHD…TLGLVQGSRL (304 aa). 86-88 contributes to the (6R)-10-formyltetrahydrofolate binding site; sequence HLI. Catalysis depends on His-104, which acts as the Proton donor; for formyltransferase activity. Residues Arg-114 and 136-140 contribute to the (6R)-10-formyltetrahydrofolate site; that span reads VKRAD. The dehydrogenase ArnADH stretch occupies residues 314 to 660; the sequence is RRTRVLILGV…RTVDLTDKPS (347 aa). Residues Asp-347 and 368-369 each bind NAD(+); that span reads DI. UDP-alpha-D-glucuronate is bound by residues Ala-393, Tyr-398, and 432-433; that span reads TS. Glu-434 acts as the Proton acceptor; for decarboxylase activity in catalysis. UDP-alpha-D-glucuronate-binding positions include Arg-460, Asn-492, 526 to 535, and Tyr-613; that span reads KLIDGGKQKR. The active-site Proton donor; for decarboxylase activity is the Arg-619.

It in the N-terminal section; belongs to the Fmt family. UDP-L-Ara4N formyltransferase subfamily. The protein in the C-terminal section; belongs to the NAD(P)-dependent epimerase/dehydratase family. UDP-glucuronic acid decarboxylase subfamily. As to quaternary structure, homohexamer, formed by a dimer of trimers.

The enzyme catalyses UDP-alpha-D-glucuronate + NAD(+) = UDP-beta-L-threo-pentopyranos-4-ulose + CO2 + NADH. It carries out the reaction UDP-4-amino-4-deoxy-beta-L-arabinose + (6R)-10-formyltetrahydrofolate = UDP-4-deoxy-4-formamido-beta-L-arabinose + (6S)-5,6,7,8-tetrahydrofolate + H(+). The protein operates within nucleotide-sugar biosynthesis; UDP-4-deoxy-4-formamido-beta-L-arabinose biosynthesis; UDP-4-deoxy-4-formamido-beta-L-arabinose from UDP-alpha-D-glucuronate: step 1/3. It participates in nucleotide-sugar biosynthesis; UDP-4-deoxy-4-formamido-beta-L-arabinose biosynthesis; UDP-4-deoxy-4-formamido-beta-L-arabinose from UDP-alpha-D-glucuronate: step 3/3. It functions in the pathway bacterial outer membrane biogenesis; lipopolysaccharide biosynthesis. Functionally, bifunctional enzyme that catalyzes the oxidative decarboxylation of UDP-glucuronic acid (UDP-GlcUA) to UDP-4-keto-arabinose (UDP-Ara4O) and the addition of a formyl group to UDP-4-amino-4-deoxy-L-arabinose (UDP-L-Ara4N) to form UDP-L-4-formamido-arabinose (UDP-L-Ara4FN). The modified arabinose is attached to lipid A and is required for resistance to polymyxin and cationic antimicrobial peptides. This chain is Bifunctional polymyxin resistance protein ArnA, found in Escherichia coli O1:K1 / APEC.